The chain runs to 560 residues: Vesicular glutamate transporter 1 (560 aa).

The Cytoplasmic segment spans residues 1-63; the sequence is MEFRQEEFRK…CTCFGLPRRY (63 aa). The helical transmembrane segment at 64–84 threads the bilayer; it reads IIAIMSGLGFCISFGIRCNLG. Residues 85–116 are Extracellular-facing; that stretch reads VAIVSMVNNSTTHRGGHVVMQKAQFNWDPETV. Residues 117–137 form a helical membrane-spanning segment; it reads GLIHGSFFWGYIVTQIPGGFI. Residues 138 to 140 lie on the Cytoplasmic side of the membrane; it reads CQK. The chain crosses the membrane as a helical span at residues 141-161; it reads FAANRVFGFAIVATSTLNMLI. Residues 162–169 lie on the Extracellular side of the membrane; it reads PSAARVHY. The helical transmembrane segment at 170 to 190 threads the bilayer; the sequence is GCVIFVRILQGLVEGVTYPAC. At 191 to 208 the chain is on the cytoplasmic side; the sequence is HGIWSKWAPPLERSRLAT. Residues 209-229 form a helical membrane-spanning segment; it reads TAFCGSYAGAVVAMPLAGVLV. Topologically, residues 230 to 236 are extracellular; it reads QYSGWSS. Residues 237–257 form a helical membrane-spanning segment; the sequence is VFYVYGSFGIFWYLFWLLVSY. The Cytoplasmic portion of the chain corresponds to 258–302; that stretch reads ESPALHPSISEEERKYIEDAIGESAKLMNPVTKFNTPWRRFFTSM. Residues 303–323 form a helical membrane-spanning segment; it reads PVYAIIVANFCRSWTFYLLLI. The Extracellular segment spans residues 324–341; that stretch reads SQPAYFEEVFGFEISKVG. The chain crosses the membrane as a helical span at residues 342 to 362; the sequence is LVSALPHLVMTIIVPIGGQIA. The Cytoplasmic portion of the chain corresponds to 363-378; sequence DFLRSRRIMSTTNVRK. The chain crosses the membrane as a helical span at residues 379–399; it reads LMNCGGFGMEATLLLVVGYSH. Topologically, residues 400-401 are extracellular; that stretch reads SK. Residues 402-422 form a helical membrane-spanning segment; it reads GVAISFLVLAVGFSGFAISGF. Residues 423-435 lie on the Cytoplasmic side of the membrane; sequence NVNHLDIAPRYAS. A helical membrane pass occupies residues 436–456; the sequence is ILMGISNGVGTLSGMVCPIIV. Over 457–469 the chain is Extracellular; sequence GAMTKHKTREEWQ. The chain crosses the membrane as a helical span at residues 470–490; the sequence is YVFLIASLVHYGGVIFYGVFA. Residues 491–560 lie on the Cytoplasmic side of the membrane; that stretch reads SGEKQPWAEP…PRPPPPVRDY (70 aa). The disordered stretch occupies residues 497–560; it reads WAEPEEMSEE…PRPPPPVRDY (64 aa). S504 is subject to Phosphoserine. Residues 520–529 are compositionally biased toward acidic residues; it reads DESEMEDEAE. 2 stretches are compositionally biased toward pro residues: residues 531–540 and 550–560; these read PGAPPAPPPS and PPRPPPPVRDY.

This sequence belongs to the major facilitator superfamily. Sodium/anion cotransporter family. VGLUT subfamily. In terms of assembly, interacts with SHANK3.

It is found in the cytoplasmic vesicle. The protein localises to the secretory vesicle. Its subcellular location is the synaptic vesicle membrane. It localises to the cell membrane. The protein resides in the synapse. It is found in the synaptosome. It carries out the reaction L-glutamate(out) = L-glutamate(in). It catalyses the reaction chloride(in) = chloride(out). The catalysed reaction is 3 Na(+)(out) + phosphate(out) = 3 Na(+)(in) + phosphate(in). The enzyme catalyses phosphate(in) = phosphate(out). It carries out the reaction K(+)(in) + H(+)(out) = K(+)(out) + H(+)(in). Its activity is regulated as follows. Chloride channel activity is allosterically activated by lumenal H(+) and Cl(-) leading to synaptic vesicles acidification. The L-glutamate transport activity is allosterically activated by lumenal H(+) and Cl(-). The allosteric activation by H(+) efficiently prevents non-vesicular efflux across the plasma membrane, thereby restricting L-glutamate transport activity to acidic membranes such as synaptic vesicles. Multifunctional transporter that transports L-glutamate as well as multiple ions such as chloride, proton, potassium, sodium and phosphate. At the synaptic vesicle membrane, mainly functions as an uniporter which transports preferentially L-glutamate but also phosphate from the cytoplasm into synaptic vesicles at presynaptic nerve terminals of excitatory neural cells. The L-glutamate or phosphate uniporter activity is electrogenic and is driven by the proton electrochemical gradient, mainly by the electrical gradient established by the vacuolar H(+)-ATPase across the synaptic vesicle membrane. In addition, functions as a chloride channel that allows a chloride permeation through the synaptic vesicle membrane that affects the proton electrochemical gradient and promotes synaptic vesicles acidification. Moreover, may function as a K(+)/H(+) antiport allowing to maintain the electrical gradient and to decrease chemical gradient and therefore sustain vesicular glutamate uptake. The vesicular K(+)/H(+) antiport activity is electroneutral. At the plasma membrane, following exocytosis, functions as a symporter of Na(+) and phosphate from the extracellular space to the cytoplasm allowing synaptic phosphate homeostasis regulation. The symporter activity is driven by an inside negative membrane potential and is electrogenic. Is necessary for synaptic signaling of visual-evoked responses from photoreceptors. This is Vesicular glutamate transporter 1 from Bos taurus (Bovine).